Reading from the N-terminus, the 137-residue chain is Structural protein A137R (137 aa).

It belongs to the asfivirus A137R family. As to quaternary structure, interacts with host TBK1.

It is found in the virion. The protein localises to the host cytoplasm. Plays a role in the inhibition of the host innate immune response. Mechanistically, promotes the autophagy-mediated lysosomal degradation of host TBK1 and affects IRF3 nuclear translocation to block type I IFN production. This is Structural protein A137R from Ornithodoros (relapsing fever ticks).